The chain runs to 213 residues: Receptor-binding cancer antigen expressed on SiSo cells (213 aa).

Over 1 to 6 the chain is Extracellular; it reads MAITQF. The chain crosses the membrane as a helical; Signal-anchor for type III membrane protein span at residues 7–27; sequence RLFKFCTCLATVFSFLKRLIC. Topologically, residues 28–213 are cytoplasmic; that stretch reads RSGRGRKLSG…EQNKIGVKLS (186 aa). Residue Ser36 is modified to Phosphoserine. Thr41 bears the Phosphothreonine mark. Tyr94 carries the post-translational modification Phosphotyrosine. The stretch at 163–211 forms a coiled coil; it reads EDAAWQAEEVLRQQKLADREKRAAEQQRKKMEKEAQRLMKKEQNKIGVK. The span at 178-206 shows a compositional bias: basic and acidic residues; sequence LADREKRAAEQQRKKMEKEAQRLMKKEQN. Residues 178-213 are disordered; sequence LADREKRAAEQQRKKMEKEAQRLMKKEQNKIGVKLS.

Homodimer. Widely expressed. Expressed in ovary, testis, prostate, thymus, muscle and heart, but not in small intestine, colon, lymph nodes, or peripherical blood lymphocytes. The protein is not detected in any of the above organs.

The protein localises to the golgi apparatus membrane. Its function is as follows. May participate in suppression of cell proliferation and induces apoptotic cell death through activation of interleukin-1-beta converting enzyme (ICE)-like proteases. The polypeptide is Receptor-binding cancer antigen expressed on SiSo cells (EBAG9) (Homo sapiens (Human)).